The chain runs to 1183 residues: 3-hydroxy-3-methylglutaryl-coenzyme A reductase (1183 aa).

Residues 1–245 (MAAILLPQRF…DLLKNAETLD (245 aa)) lie on the Cytoplasmic side of the membrane. The SSD domain occupies 245 to 426 (DIVIMLLGYI…FTFYTAILSI (182 aa)). A helical membrane pass occupies residues 246–266 (IVIMLLGYIAMHLTFVSLFLS). Over 267–273 (MRKMGSK) the chain is Lumenal. A helical transmembrane segment spans residues 274-294 (FWLGICTLFSSVFAFLFGLVV). Topologically, residues 295–299 (TTKLG) are cytoplasmic. A helical transmembrane segment spans residues 300–320 (VPISVILLSEGLPFLVVTIGF). Residues 321-378 (EKNIVLTRAVMSHAIEHRRIQAQNSKSGKRSPERSTQNMIQYAVQAAIKEKGFEIIRD) lie on the Lumenal side of the membrane. The chain crosses the membrane as a helical span at residues 379 to 399 (YAIEIVILVIGAASGVQGGLQ). Topologically, residues 400 to 402 (QFC) are cytoplasmic. A helical membrane pass occupies residues 403-423 (FLAAWTLFFDFILLFTFYTAI). Residues 424 to 482 (LSIKLEINRIKRHVDMRMALEDDGVSRRVAENVAKGDDELNRVRGDAPLFGRKSSSIPK) lie on the Lumenal side of the membrane. A helical membrane pass occupies residues 483-503 (FKVLMILGFIFVNIVNICSIP). Topologically, residues 504–1183 (FRNPSSMSTI…SAAAIQRSKR (680 aa)) are cytoplasmic. Glutamate 828 functions as the Charge relay system in the catalytic mechanism. 834-840 (SASRGCK) contributes to the CoA binding site. NADP(+)-binding positions include 895–897 (SRF) and 922–930 (DAMGMNMIS). Residue lysine 962 is the Charge relay system of the active site. Residue 991-993 (VLK) participates in CoA binding. Aspartate 1038 acts as the Charge relay system in catalysis. A CoA-binding site is contributed by 1133–1134 (AH). Residue histidine 1134 is the Proton donor of the active site. Residues 1136–1183 (QHNRSAAPSRSTTPAPPMTPVSLAMTSAQERSASTTSMSAAAIQRSKR) are disordered. 1138–1139 (NR) provides a ligand contact to NADP(+). Composition is skewed to low complexity over residues 1139 to 1148 (RSAAPSRSTT) and 1167 to 1177 (SASTTSMSAAA).

This sequence belongs to the HMG-CoA reductase family.

The protein resides in the endoplasmic reticulum membrane. The catalysed reaction is (R)-mevalonate + 2 NADP(+) + CoA = (3S)-3-hydroxy-3-methylglutaryl-CoA + 2 NADPH + 2 H(+). The protein operates within metabolic intermediate biosynthesis; (R)-mevalonate biosynthesis; (R)-mevalonate from acetyl-CoA: step 3/3. HMG-CoA reductase; part of the first module of ergosterol biosynthesis pathway that includes the early steps of the pathway, conserved across all eukaryotes, and which results in the formation of mevalonate from acetyl-coenzyme A (acetyl-CoA). In this module, the cytosolic acetyl-CoA acetyltransferase catalyzes the formation of acetoacetyl-CoA. The hydroxymethylglutaryl-CoA synthase then condenses acetyl-CoA with acetoacetyl-CoA to form HMG-CoA. The rate-limiting step of the early module is the reduction to mevalonate by the 3-hydroxy-3-methylglutaryl-coenzyme A (HMG-CoA) reductase HMGR. This Gibberella fujikuroi (strain CBS 195.34 / IMI 58289 / NRRL A-6831) (Bakanae and foot rot disease fungus) protein is 3-hydroxy-3-methylglutaryl-coenzyme A reductase (HMGR).